We begin with the raw amino-acid sequence, 158 residues long: NAD(P)H-quinone oxidoreductase subunit J, chloroplastic (158 aa).

This sequence belongs to the complex I 30 kDa subunit family. As to quaternary structure, NDH is composed of at least 16 different subunits, 5 of which are encoded in the nucleus.

The protein localises to the plastid. It localises to the chloroplast thylakoid membrane. The enzyme catalyses a plastoquinone + NADH + (n+1) H(+)(in) = a plastoquinol + NAD(+) + n H(+)(out). It catalyses the reaction a plastoquinone + NADPH + (n+1) H(+)(in) = a plastoquinol + NADP(+) + n H(+)(out). Functionally, NDH shuttles electrons from NAD(P)H:plastoquinone, via FMN and iron-sulfur (Fe-S) centers, to quinones in the photosynthetic chain and possibly in a chloroplast respiratory chain. The immediate electron acceptor for the enzyme in this species is believed to be plastoquinone. Couples the redox reaction to proton translocation, and thus conserves the redox energy in a proton gradient. The sequence is that of NAD(P)H-quinone oxidoreductase subunit J, chloroplastic from Arabis hirsuta (Hairy rock-cress).